The primary structure comprises 354 residues: tRNA N6-adenosine threonylcarbamoyltransferase (354 aa).

Fe cation-binding residues include H111 and H115. Substrate is bound by residues 134–138 (LVSGG), D167, G180, and N279. Residue D319 participates in Fe cation binding.

Belongs to the KAE1 / TsaD family. Requires Fe(2+) as cofactor.

It is found in the cytoplasm. The catalysed reaction is L-threonylcarbamoyladenylate + adenosine(37) in tRNA = N(6)-L-threonylcarbamoyladenosine(37) in tRNA + AMP + H(+). Required for the formation of a threonylcarbamoyl group on adenosine at position 37 (t(6)A37) in tRNAs that read codons beginning with adenine. Is involved in the transfer of the threonylcarbamoyl moiety of threonylcarbamoyl-AMP (TC-AMP) to the N6 group of A37, together with TsaE and TsaB. TsaD likely plays a direct catalytic role in this reaction. In Neisseria meningitidis serogroup A / serotype 4A (strain DSM 15465 / Z2491), this protein is tRNA N6-adenosine threonylcarbamoyltransferase.